Reading from the N-terminus, the 392-residue chain is 5-azacytidine-induced protein 2 (392 aa).

The tract at residues 1–197 is homodimerization; that stretch reads MDALVEDDIC…IELQKAKQTD (197 aa). Coiled-coil stretches lie at residues 40–76, 102–135, and 166–196; these read ALVTAYEDIKKRLKDSEKENSLLKKRIRFLEEKLIAR, DRDNLKSKLDKMNKDNSESLKVLNEQLQSKEVEL, and DLKIHGLEQELELMRKECSDLKIELQKAKQT. An interaction with TBK1 and IKBKE region spans residues 216-257; that stretch reads SDNMQHAYWELKREMSNLHLVTQVQAELLRKLKTSTAIKKAC. Residues serine 318 and serine 353 each carry the phosphoserine modification. The disordered stretch occupies residues 345 to 365; it reads EDNSWVFPSPPKSSETAFGET.

Homodimer. Interacts with IKBKE, TBK1 and TICAM1. Interacts with TAX1BP1. Interacts with CALCOCO2. Ubiquitinated via 'Lys-48'-linked polyubiquitination by TRIM38, leading to its degradation.

The protein resides in the cytoplasm. Adapter protein which binds TBK1 and IKBKE playing a role in antiviral innate immunity. Activates serine/threonine-protein kinase TBK1 and facilitates its oligomerization. Enhances the phosphorylation of NF-kappa-B p65 subunit RELA by TBK1. Promotes TBK1-induced as well as TNF-alpha or PMA-induced activation of NF-kappa-B. Participates in IFNB promoter activation via TICAM1. The polypeptide is 5-azacytidine-induced protein 2 (AZI2) (Pongo abelii (Sumatran orangutan)).